The chain runs to 310 residues: Ribosomal RNA large subunit methyltransferase F (310 aa).

It belongs to the methyltransferase superfamily. METTL16/RlmF family.

The protein resides in the cytoplasm. The catalysed reaction is adenosine(1618) in 23S rRNA + S-adenosyl-L-methionine = N(6)-methyladenosine(1618) in 23S rRNA + S-adenosyl-L-homocysteine + H(+). Its function is as follows. Specifically methylates the adenine in position 1618 of 23S rRNA. The protein is Ribosomal RNA large subunit methyltransferase F of Pseudoalteromonas translucida (strain TAC 125).